The sequence spans 339 residues: Quinolinate synthase (339 aa).

Residues histidine 63 and serine 81 each contribute to the iminosuccinate site. A [4Fe-4S] cluster-binding site is contributed by cysteine 126. Residues 152 to 154 (YVN) and serine 169 each bind iminosuccinate. Cysteine 211 provides a ligand contact to [4Fe-4S] cluster. Iminosuccinate contacts are provided by residues 237-239 (HPE) and threonine 254. Cysteine 297 is a [4Fe-4S] cluster binding site.

The protein belongs to the quinolinate synthase family. Type 2 subfamily. Requires [4Fe-4S] cluster as cofactor.

Its subcellular location is the cytoplasm. The enzyme catalyses iminosuccinate + dihydroxyacetone phosphate = quinolinate + phosphate + 2 H2O + H(+). Its pathway is cofactor biosynthesis; NAD(+) biosynthesis; quinolinate from iminoaspartate: step 1/1. In terms of biological role, catalyzes the condensation of iminoaspartate with dihydroxyacetone phosphate to form quinolinate. The protein is Quinolinate synthase of Xylella fastidiosa (strain 9a5c).